Consider the following 294-residue polypeptide: 33 kDa chaperonin (294 aa).

Disulfide bonds link Cys-235-Cys-237 and Cys-268-Cys-271.

Belongs to the HSP33 family. Under oxidizing conditions two disulfide bonds are formed involving the reactive cysteines. Under reducing conditions zinc is bound to the reactive cysteines and the protein is inactive.

Its subcellular location is the cytoplasm. Redox regulated molecular chaperone. Protects both thermally unfolding and oxidatively damaged proteins from irreversible aggregation. Plays an important role in the bacterial defense system toward oxidative stress. The chain is 33 kDa chaperonin from Proteus mirabilis (strain HI4320).